The primary structure comprises 117 residues: UPF0342 protein BLi01058/BL02870 (117 aa).

Belongs to the UPF0342 family.

This chain is UPF0342 protein BLi01058/BL02870, found in Bacillus licheniformis (strain ATCC 14580 / DSM 13 / JCM 2505 / CCUG 7422 / NBRC 12200 / NCIMB 9375 / NCTC 10341 / NRRL NRS-1264 / Gibson 46).